A 692-amino-acid chain; its full sequence is uncharacterized protein (692 aa).

Residues 1–39 (MLRLPSSMPIVSFPANPNLLINPQPSWPSRRGNSAVVVS) constitute a chloroplast transit peptide. The region spanning 189–523 (EISPEPVAAA…RLESLLSESL (335 aa)) is the Protein kinase domain. ATP contacts are provided by residues 195–203 (VAAASLGQV) and K218. D343 serves as the catalytic Proton acceptor.

The protein belongs to the protein kinase superfamily. ADCK protein kinase family.

Its subcellular location is the plastid. The protein localises to the chloroplast. It localises to the plastoglobule. This is an uncharacterized protein from Arabidopsis thaliana (Mouse-ear cress).